Reading from the N-terminus, the 546-residue chain is Chaperonin GroEL (546 aa).

ATP-binding positions include 30–33 (TLGP), K51, 87–91 (DGTTT), G415, and D495.

It belongs to the chaperonin (HSP60) family. Forms a cylinder of 14 subunits composed of two heptameric rings stacked back-to-back. Interacts with the co-chaperonin GroES.

The protein resides in the cytoplasm. It carries out the reaction ATP + H2O + a folded polypeptide = ADP + phosphate + an unfolded polypeptide.. Functionally, together with its co-chaperonin GroES, plays an essential role in assisting protein folding. The GroEL-GroES system forms a nano-cage that allows encapsulation of the non-native substrate proteins and provides a physical environment optimized to promote and accelerate protein folding. The chain is Chaperonin GroEL from Brucella ovis (strain ATCC 25840 / 63/290 / NCTC 10512).